Consider the following 306-residue polypeptide: B- and T-lymphocyte attenuator (306 aa).

An N-terminal signal peptide occupies residues 1-29 (MKTVPAMLGTPRLFREFFILHLGLWSILC). Over 30–183 (EKATKRNDEE…ERPGRTWLLY (154 aa)) the chain is Extracellular. Residues 37–139 (DEECPVQLTI…SQVINSHSVT (103 aa)) enclose the Ig-like V-type domain. 3 cysteine pairs are disulfide-bonded: Cys-40/Cys-69, Cys-64/Cys-124, and Cys-78/Cys-85. 6 N-linked (GlcNAc...) asparagine glycosylation sites follow: Asn-74, Asn-81, Asn-101, Asn-119, Asn-148, and Asn-165. A helical transmembrane segment spans residues 184–204 (TLLPLGALLLLLACVCLLCFL). At 205 to 306 (KRIQGKEKKP…TEYASICVRS (102 aa)) the chain is on the cytoplasmic side.

Interacts with tyrosine phosphatases PTPN6/SHP-1 and PTPN11/SHP-2. Interacts with TNFRSF14/HVEM (via cysteine-rich domain 1). In terms of processing, phosphorylated on Tyr residues by TNFRSF14 and by antigen receptors cross-linking, both inducing association with PTPN6 and PTPN11. Post-translationally, N-glycosylated. Expressed in splenic T- and B-cells as well as lymph node tissues but very weakly in somatic tissues. Also expressed in macrophages, NK cells and dendritic cells. A polymorphic tissue distribution between several strains is seen.

The protein resides in the cell membrane. In terms of biological role, inhibitory receptor on lymphocytes that negatively regulates antigen receptor signaling via PTPN6/SHP-1 and PTPN11/SHP-2. May interact in cis (on the same cell) or in trans (on other cells) with TNFRSF14. In cis interactions, appears to play an immune regulatory role inhibiting in trans interactions in naive T cells to maintain a resting state. In trans interactions, can predominate during adaptive immune response to provide survival signals to effector T cells. The protein is B- and T-lymphocyte attenuator of Mus musculus (Mouse).